We begin with the raw amino-acid sequence, 477 residues long: MSKKLHIKTWGCQMNEYDSSKMADLLDASNGYTLTEEPEEADVLLLNTCSIREKAQEKVFHQLGRWKKLKANKPGLVIGVGGCVASQEGDNIRTRAPYVDIVFGPQTLHRLPTMIKQVQEGRGAQVDVAFPEIEKFDSLPEPRAEGATAFVSIMEGCSKYCSFCVVPYTRGEEVSRPLDDVLYEIAQLAQQGVREVNLLGQNVNAYRGPTFDGGICTFAELLRLVAAIDGIDRIRYTTSHPIEFTDDIIEVYKDTPEVVSFLHLPVQSGSDRILTMMKRPHTVLEYKSKIRRLRAARPDITISSDFIVGFPNETDEDFEATMKLIEEINFDMSFSFIYSPRPGTPAADLPDDVDMEVKKARLTRLQHVINNQSMQIGRAMLGSTQRILVEGPSKLDPMQLCGRTENNRVVNFEGPHTLIGGFADVEITEVRPNSLRGKFLRGENEMNLRIATAPSEILARRPDNVPDPLGVAAFTPH.

An MTTase N-terminal domain is found at 3–120 (KKLHIKTWGC…LPTMIKQVQE (118 aa)). 6 residues coordinate [4Fe-4S] cluster: C12, C49, C83, C157, C161, and C164. In terms of domain architecture, Radical SAM core spans 143-375 (RAEGATAFVS…QHVINNQSMQ (233 aa)). Residues 378 to 441 (RAMLGSTQRI…PNSLRGKFLR (64 aa)) enclose the TRAM domain.

Belongs to the methylthiotransferase family. MiaB subfamily. Monomer. [4Fe-4S] cluster is required as a cofactor.

It localises to the cytoplasm. It catalyses the reaction N(6)-dimethylallyladenosine(37) in tRNA + (sulfur carrier)-SH + AH2 + 2 S-adenosyl-L-methionine = 2-methylsulfanyl-N(6)-dimethylallyladenosine(37) in tRNA + (sulfur carrier)-H + 5'-deoxyadenosine + L-methionine + A + S-adenosyl-L-homocysteine + 2 H(+). Its function is as follows. Catalyzes the methylthiolation of N6-(dimethylallyl)adenosine (i(6)A), leading to the formation of 2-methylthio-N6-(dimethylallyl)adenosine (ms(2)i(6)A) at position 37 in tRNAs that read codons beginning with uridine. The polypeptide is tRNA-2-methylthio-N(6)-dimethylallyladenosine synthase (Aeromonas hydrophila subsp. hydrophila (strain ATCC 7966 / DSM 30187 / BCRC 13018 / CCUG 14551 / JCM 1027 / KCTC 2358 / NCIMB 9240 / NCTC 8049)).